Here is a 119-residue protein sequence, read N- to C-terminus: Large ribosomal subunit protein bL20 (119 aa).

This sequence belongs to the bacterial ribosomal protein bL20 family.

Its function is as follows. Binds directly to 23S ribosomal RNA and is necessary for the in vitro assembly process of the 50S ribosomal subunit. It is not involved in the protein synthesizing functions of that subunit. The sequence is that of Large ribosomal subunit protein bL20 from Heliobacterium modesticaldum (strain ATCC 51547 / Ice1).